We begin with the raw amino-acid sequence, 1042 residues long: Glutamate dehydrogenase 2 (1042 aa).

The active site involves K596. An ADP-ribosylarginine; by Legionella Lart1 modification is found at R763.

It belongs to the Glu/Leu/Phe/Val dehydrogenases family. In terms of assembly, homodimer. (Microbial infection) ADP-ribosylated at Arg-763 by the Legionella pneumophila effector Lart1, which inhibits the glutamate dehydrogenase activity. Amoeba are natural hosts of Legionella, and ADP-ribosylation by Lart1 may promote Legionella parasitism.

It is found in the cytoplasm. It catalyses the reaction L-glutamate + NAD(+) + H2O = 2-oxoglutarate + NH4(+) + NADH + H(+). Activity is stimulated by AMP. With respect to regulation, (Microbial infection) Inhibited by ADP-ribosylation. This chain is Glutamate dehydrogenase 2 (glud2), found in Dictyostelium discoideum (Social amoeba).